The sequence spans 420 residues: Carboxypeptidase A4 (420 aa).

The N-terminal stretch at 1 to 16 is a signal peptide; it reads MKWLLFFGALIGAGIC. Residues 17–113 constitute a propeptide, activation peptide; the sequence is GRDKFFGDQV…EMQHNEGIER (97 aa). 7 residues coordinate a protein: Pro69, Val71, Asn118, Tyr122, His123, Glu126, and Phe162. The region spanning 121–415 is the Peptidase M14 domain; it reads AYHPLEAIYH…LGLKTIMEHV (295 aa). Residues His180 and Glu183 each contribute to the Zn(2+) site. The cysteines at positions 249 and 272 are disulfide-linked. An N-linked (GlcNAc...) asparagine glycan is attached at Asn259. Zn(2+) is bound at residue His307. The active-site Proton donor/acceptor is the Glu381.

It belongs to the peptidase M14 family. Interacts with LXN. Zn(2+) is required as a cofactor.

Its subcellular location is the secreted. Functionally, metalloprotease that cleaves hydrophobic C-terminal residues with a preference for -Phe, -Leu, -Ile, -Met, -Tyr and -Val. May function in peptide hormone and/or neuropeptide catabolism. The protein is Carboxypeptidase A4 (Cpa4) of Mus musculus (Mouse).